The primary structure comprises 440 residues: Chromosome partition protein MukF (440 aa).

The tract at residues 208–236 is leucine-zipper; that stretch reads LSETSGTLRELQDTLEAAGDKLQANLLRI.

This sequence belongs to the MukF family. In terms of assembly, interacts, and probably forms a ternary complex, with MukE and MukB via its C-terminal region. The complex formation is stimulated by calcium or magnesium. It is required for an interaction between MukE and MukB.

The protein localises to the cytoplasm. It localises to the nucleoid. Its function is as follows. Involved in chromosome condensation, segregation and cell cycle progression. May participate in facilitating chromosome segregation by condensation DNA from both sides of a centrally located replisome during cell division. Not required for mini-F plasmid partitioning. Probably acts via its interaction with MukB and MukE. Overexpression results in anucleate cells. It has a calcium binding activity. The protein is Chromosome partition protein MukF of Escherichia fergusonii (strain ATCC 35469 / DSM 13698 / CCUG 18766 / IAM 14443 / JCM 21226 / LMG 7866 / NBRC 102419 / NCTC 12128 / CDC 0568-73).